A 1070-amino-acid polypeptide reads, in one-letter code: DNA-directed RNA polymerase subunit beta (1070 aa).

The protein belongs to the RNA polymerase beta chain family. In plastids the minimal PEP RNA polymerase catalytic core is composed of four subunits: alpha, beta, beta', and beta''. When a (nuclear-encoded) sigma factor is associated with the core the holoenzyme is formed, which can initiate transcription.

It is found in the plastid. Its subcellular location is the chloroplast. The catalysed reaction is RNA(n) + a ribonucleoside 5'-triphosphate = RNA(n+1) + diphosphate. Its function is as follows. DNA-dependent RNA polymerase catalyzes the transcription of DNA into RNA using the four ribonucleoside triphosphates as substrates. The sequence is that of DNA-directed RNA polymerase subunit beta from Nandina domestica (Heavenly bamboo).